The chain runs to 183 residues: Ribosome-recycling factor (183 aa).

The protein belongs to the RRF family.

The protein resides in the cytoplasm. Responsible for the release of ribosomes from messenger RNA at the termination of protein biosynthesis. May increase the efficiency of translation by recycling ribosomes from one round of translation to another. This Acetivibrio thermocellus (strain ATCC 27405 / DSM 1237 / JCM 9322 / NBRC 103400 / NCIMB 10682 / NRRL B-4536 / VPI 7372) (Clostridium thermocellum) protein is Ribosome-recycling factor.